A 3649-amino-acid chain; its full sequence is N-(5-amino-5-carboxypentanoyl)-L-cysteinyl-D-valine synthase (3649 aa).

Residues 401-861 (SRDRAYVTYT…LAGHLESQGH (461 aa)) are domain 1 (adipate-activating). Carrier domains lie at 783–860 (APLL…ESQG), 1859–1936 (APVS…QAAA), and 2909–2984 (APRD…LSGL). 3 positions are modified to O-(pantetheine 4'-phosphoryl)serine: serine 820, serine 1896, and serine 2944. The interval 1014–1937 (HHIILDGWSL…QAEHIQAAAL (924 aa)) is domain 2 (cysteine-activating). Residues 2079–2985 (HHSCFDGWSW…FVDNVLSGLA (907 aa)) are domain 3 (valine-activating). Serine 3502 serves as the catalytic For thioesterase activity.

The protein belongs to the ATP-dependent AMP-binding enzyme family. Pantetheine 4'-phosphate serves as cofactor.

It catalyses the reaction L-2-aminoadipate + L-valine + L-cysteine + 3 ATP + H2O = N-[(5S)-5-amino-5-carboxypentanoyl]-L-cysteinyl-D-valine + 3 AMP + 3 diphosphate + 3 H(+). It participates in antibiotic biosynthesis; penicillin G biosynthesis; penicillin G from L-alpha-aminoadipate and L-cysteine and L-valine: step 1/3. Functionally, each of the constituent amino acids of the tripeptide acv are activated as aminoacyl-adenylates with peptide bonds formed through the participation of amino acid thioester intermediates. The chain is N-(5-amino-5-carboxypentanoyl)-L-cysteinyl-D-valine synthase (pcbAB) from Amycolatopsis lactamdurans (Nocardia lactamdurans).